Reading from the N-terminus, the 262-residue chain is Tetratricopeptide repeat protein 33 (262 aa).

TPR repeat units follow at residues 59–92 (SKQLKDEGASLAENKRYREAIQKWDEALQLTPND), 93–126 (ATLYEMKSQVLMSLHEMFPAVHAAEMAVQQNPHS), and 127–160 (WESWQTLGRAQLGLGEIILAIRSFQVALHIYPMN). Residue Ser197 is modified to Phosphoserine. Thr251 carries the post-translational modification Phosphothreonine.

This chain is Tetratricopeptide repeat protein 33 (TTC33), found in Homo sapiens (Human).